A 156-amino-acid chain; its full sequence is Ribosomal RNA large subunit methyltransferase H (156 aa).

S-adenosyl-L-methionine-binding positions include Leu-72, Gly-104, and 123-128 (LGKMVW).

The protein belongs to the RNA methyltransferase RlmH family. Homodimer.

Its subcellular location is the cytoplasm. The catalysed reaction is pseudouridine(1915) in 23S rRNA + S-adenosyl-L-methionine = N(3)-methylpseudouridine(1915) in 23S rRNA + S-adenosyl-L-homocysteine + H(+). Specifically methylates the pseudouridine at position 1915 (m3Psi1915) in 23S rRNA. This is Ribosomal RNA large subunit methyltransferase H from Roseobacter denitrificans (strain ATCC 33942 / OCh 114) (Erythrobacter sp. (strain OCh 114)).